A 391-amino-acid chain; its full sequence is Ammonium transporter Amt1 (391 aa).

10 helical membrane passes run 12-32 (VFFF…FIAL), 51-71 (LDLA…SYGF), 88-108 (AWWM…TGGV), 112-132 (IKIL…YPIV), 152-172 (AGSG…AYVL), 192-212 (IPIA…FNIG), 223-243 (LASV…GGAL), 261-281 (VAVC…VGLL), 305-325 (IGPV…IPFL), and 338-358 (GQII…LIIY).

Belongs to the ammonia transporter channel (TC 1.A.11.2) family. In terms of assembly, homotrimer. Interacts and forms a complex with GlnK1.

Its subcellular location is the cell membrane. With respect to regulation, activity is regulated by the nitrogen regulatory protein GlnK1 via direct interaction. Formation of the GlnK1/Amt1 complex is decreased in the presence of Mg-ATP or 2-oxoglutarate. The presence of both effectors abolishes the formation of the complex. In terms of biological role, involved in the uptake of ammonium/ammonia (NH(4)(+)/NH(3)). Transport is electrogenic. This is Ammonium transporter Amt1 from Methanocaldococcus jannaschii (strain ATCC 43067 / DSM 2661 / JAL-1 / JCM 10045 / NBRC 100440) (Methanococcus jannaschii).